The following is a 124-amino-acid chain: UPF0231 protein Sputcn32_0682 (124 aa).

This sequence belongs to the UPF0231 family.

The chain is UPF0231 protein Sputcn32_0682 from Shewanella putrefaciens (strain CN-32 / ATCC BAA-453).